We begin with the raw amino-acid sequence, 232 residues long: Ribose-5-phosphate isomerase A (232 aa).

Substrate contacts are provided by residues 28 to 31 (TGST), 83 to 86 (DGAD), and 96 to 99 (KGGG). Glu-105 serves as the catalytic Proton acceptor. Residue Lys-123 coordinates substrate.

Belongs to the ribose 5-phosphate isomerase family. In terms of assembly, homodimer.

It catalyses the reaction aldehydo-D-ribose 5-phosphate = D-ribulose 5-phosphate. It functions in the pathway carbohydrate degradation; pentose phosphate pathway; D-ribose 5-phosphate from D-ribulose 5-phosphate (non-oxidative stage): step 1/1. Catalyzes the reversible conversion of ribose-5-phosphate to ribulose 5-phosphate. The polypeptide is Ribose-5-phosphate isomerase A (Rhodopseudomonas palustris (strain BisB5)).